The following is a 309-amino-acid chain: General transcription factor IIH subunit 3 (309 aa).

The C4-type zinc-finger motif lies at 269 to 286 (CSVCLSIFCNFSPICTTC).

The protein belongs to the TFB4 family. In terms of assembly, part of a TFIID-containing RNA polymerase II pre-initiation complex that is composed of TBP and at least GTF2A1, GTF2A2, GTF2E1, GTF2E2, GTF2F1, GTF2H2, GTF2H3, GTF2H4, GTF2H5, GTF2B, TCEA1, ERCC2, ERCC3, TAF1, TAF2, TAF3, TAF4, TAF5, TAF6, TAF7, TAF8, TAF9, TAF10, TAF11, TAF12 and TAF13. Component of the 7-subunit TFIIH core complex composed of XPB/ERCC3, XPD/ERCC2, GTF2H1, GTF2H2, GTF2H3, GTF2H4 and GTF2H5, which is active in NER. The core complex associates with the 3-subunit CDK-activating kinase (CAK) module composed of CCNH/cyclin H, CDK7 and MNAT1 to form the 10-subunit holoenzyme (holo-TFIIH) active in transcription. Interacts with RARA; the interaction requires prior phosphorylation of RARA on 'Ser-369' which then enhances interaction of RARA with CDK7.

The protein localises to the nucleus. Its function is as follows. Component of the general transcription and DNA repair factor IIH (TFIIH) core complex, which is involved in general and transcription-coupled nucleotide excision repair (NER) of damaged DNA and, when complexed to CAK, in RNA transcription by RNA polymerase II. In NER, TFIIH acts by opening DNA around the lesion to allow the excision of the damaged oligonucleotide and its replacement by a new DNA fragment. In transcription, TFIIH has an essential role in transcription initiation. When the pre-initiation complex (PIC) has been established, TFIIH is required for promoter opening and promoter escape. Phosphorylation of the C-terminal tail (CTD) of the largest subunit of RNA polymerase II by the kinase module CAK controls the initiation of transcription. The sequence is that of General transcription factor IIH subunit 3 (Gtf2h3) from Mus musculus (Mouse).